Reading from the N-terminus, the 262-residue chain is Hydroxyethylthiazole kinase (262 aa).

Methionine 44 provides a ligand contact to substrate. The ATP site is built by arginine 118 and threonine 166. Residue glycine 193 participates in substrate binding.

It belongs to the Thz kinase family. Requires Mg(2+) as cofactor.

It carries out the reaction 5-(2-hydroxyethyl)-4-methylthiazole + ATP = 4-methyl-5-(2-phosphooxyethyl)-thiazole + ADP + H(+). The protein operates within cofactor biosynthesis; thiamine diphosphate biosynthesis; 4-methyl-5-(2-phosphoethyl)-thiazole from 5-(2-hydroxyethyl)-4-methylthiazole: step 1/1. Catalyzes the phosphorylation of the hydroxyl group of 4-methyl-5-beta-hydroxyethylthiazole (THZ). The sequence is that of Hydroxyethylthiazole kinase from Chlamydia felis (strain Fe/C-56) (Chlamydophila felis).